The sequence spans 230 residues: UPF0494 membrane protein C1348.07 (230 aa).

The next 3 helical transmembrane spans lie at 78–98 (WPLLIIWCILIVFAIDKNFEV), 120–140 (IWGPIAIYICLFILLLLGLIY), and 148–168 (AIPLISIVIAAVVVIIAVAMV).

It belongs to the UPF0494 family.

The protein resides in the vacuole. The protein localises to the membrane. The sequence is that of UPF0494 membrane protein C1348.07 from Schizosaccharomyces pombe (strain 972 / ATCC 24843) (Fission yeast).